A 319-amino-acid chain; its full sequence is D-alanine--D-alanine ligase B (319 aa).

An ATP-grasp domain is found at K117–A312. A143 to T198 contributes to the ATP binding site. The Mg(2+) site is built by D266, E279, and N281.

This sequence belongs to the D-alanine--D-alanine ligase family. Mg(2+) serves as cofactor. The cofactor is Mn(2+).

It is found in the cytoplasm. The catalysed reaction is 2 D-alanine + ATP = D-alanyl-D-alanine + ADP + phosphate + H(+). The protein operates within cell wall biogenesis; peptidoglycan biosynthesis. Functionally, cell wall formation. In Pseudomonas aeruginosa (strain ATCC 15692 / DSM 22644 / CIP 104116 / JCM 14847 / LMG 12228 / 1C / PRS 101 / PAO1), this protein is D-alanine--D-alanine ligase B.